The sequence spans 1170 residues: Probable mRNA-capping enzyme (1170 aa).

Lys-292 acts as the N6-GMP-lysine intermediate in catalysis. Residues 684-1007 (SNAAGMRAFN…LNRYYVFRKT (324 aa)) enclose the mRNA cap 0 methyltransferase domain. Position 693 to 694 (693 to 694 (NN)) interacts with mRNA. Residues Lys-697, Gly-715, Asp-737, and 813-815 (QFT) contribute to the S-adenosyl-L-methionine site.

In the N-terminal section; belongs to the dsDNA virus mRNA guanylyltransferase family. The protein in the C-terminal section; belongs to the class I-like SAM-binding methyltransferase superfamily. mRNA cap 0 methyltransferase family.

It is found in the virion. The enzyme catalyses a 5'-end triphospho-ribonucleoside in mRNA + H2O = a 5'-end diphospho-ribonucleoside in mRNA + phosphate + H(+). It carries out the reaction a 5'-end diphospho-ribonucleoside in mRNA + GTP + H(+) = a 5'-end (5'-triphosphoguanosine)-ribonucleoside in mRNA + diphosphate. The catalysed reaction is a 5'-end (5'-triphosphoguanosine)-ribonucleoside in mRNA + S-adenosyl-L-methionine = a 5'-end (N(7)-methyl 5'-triphosphoguanosine)-ribonucleoside in mRNA + S-adenosyl-L-homocysteine. It functions in the pathway mRNA processing; mRNA capping. In terms of biological role, responsible for methylating the 5'-cap structure of mRNAs. This is Probable mRNA-capping enzyme from Acanthamoeba polyphaga mimivirus (APMV).